The following is a 165-amino-acid chain: RNA pyrophosphohydrolase (165 aa).

Residues 13-154 enclose the Nudix hydrolase domain; sequence PYRQGVGIML…KRPVYEQVVA (142 aa). The Nudix box signature appears at 46–67; the sequence is GGIDAGEDPETAAWREMEEEIG.

This sequence belongs to the Nudix hydrolase family. RppH subfamily. A divalent metal cation is required as a cofactor.

Functionally, accelerates the degradation of transcripts by removing pyrophosphate from the 5'-end of triphosphorylated RNA, leading to a more labile monophosphorylated state that can stimulate subsequent ribonuclease cleavage. The sequence is that of RNA pyrophosphohydrolase from Rhodospirillum rubrum (strain ATCC 11170 / ATH 1.1.1 / DSM 467 / LMG 4362 / NCIMB 8255 / S1).